The following is a 787-amino-acid chain: Probable phosphoketolase (787 aa).

It belongs to the XFP family. Thiamine diphosphate serves as cofactor.

This is Probable phosphoketolase from Pediococcus pentosaceus (strain ATCC 25745 / CCUG 21536 / LMG 10740 / 183-1w).